The following is a 441-amino-acid chain: Insulinoma-associated protein 1 (441 aa).

A compositionally biased stretch (basic residues) spans 1–12 (MPKGFLVKRSRK). Positions 1 to 20 (MPKGFLVKRSRKSPPVSYRV) are SNAG domain. 4 disordered regions span residues 1–31 (MPKG…GESL), 43–189 (TGGA…KAIR), 205–224 (LKIK…SSGP), and 278–316 (RWHK…EDGL). Residues 19–28 (RVREEEEPRG) are compositionally biased toward basic and acidic residues. A compositionally biased stretch (polar residues) spans 74 to 83 (NPDTVQQALY). A compositionally biased stretch (basic and acidic residues) spans 89 to 98 (VSREQRERKY). Low complexity-rich tracts occupy residues 138–147 (VSSSSSVSRS) and 169–180 (GATSSSAPSKPP). The C2H2-type 1 zinc-finger motif lies at 258–280 (YRCPECHKVFSCPANLASHRRWH). Positions 292 to 302 (AKEEPLSDRDT) are enriched in basic and acidic residues. 3 consecutive C2H2-type zinc fingers follow at residues 317–339 (YECP…LLSH), 372–395 (HPCP…RLLH), and 400–423 (YPCK…NKCH).

This sequence belongs to the INSM1 family.

It is found in the nucleus. Functionally, may act as a transcriptional regulator. Plays a role in noradrenergic neuron, pancreatic and gastrointestinal endocrine cells differentiation during embryonic development. This Xenopus tropicalis (Western clawed frog) protein is Insulinoma-associated protein 1 (insm1).